Here is a 448-residue protein sequence, read N- to C-terminus: Nucleoprotein (448 aa).

The disordered stretch occupies residues 1–55 (MSFTPGKQSSSRASSGNRSGNGILKWADQSDQSRNVQTRGRRAQPKQTATSQQPS). The span at 9-22 (SSSRASSGNRSGNG) shows a compositional bias: low complexity. Composition is skewed to polar residues over residues 29–38 (QSDQSRNVQT) and 45–55 (PKQTATSQQPS). Positions 52–194 (QQPSAGNVVP…GYYIEGSGRS (143 aa)) are RNA-binding. The CoV N NTD domain occupies 61-190 (PYYSWFSGIT…VLPQGYYIEG (130 aa)). Residues Arg-106, Arg-122, and Arg-164 each contribute to the RNA site. Disordered regions lie at residues 157-231 (TPAD…VTPD), 266-298 (ILNKPRQKRSPNKQCTVQQCFGKRGPNQNFGGG), and 385-448 (GMMN…TSEI). The residue at position 167 (Ser-167) is a Phosphoserine; by host. Position 174 is a phosphothreonine; by host (Thr-174). At Ser-191 the chain carries Phosphoserine; by host. Residues 193-223 (RSAPNSRSTSRTSSRASSAGSRSRANSGNRT) are compositionally biased toward low complexity. Residues 259-384 (AKEIRQKILN…ENLNAYQQQD (126 aa)) form the CoV N CTD domain. Residues 266-276 (ILNKPRQKRSP) are compositionally biased toward basic residues. The segment at 266–384 (ILNKPRQKRS…ENLNAYQQQD (119 aa)) is dimerization. Ser-390 is modified (phosphoserine; by host). Residues 399-409 (QKNGQGENDNI) are compositionally biased toward polar residues. Residues 422-439 (KSRELTAEDISLLKKMDE) are compositionally biased toward basic and acidic residues. A Phosphoserine; by host modification is found at Ser-423. A Phosphothreonine; by host modification is found at Thr-427.

It belongs to the betacoronavirus nucleocapsid protein family. Homooligomer. Both monomeric and oligomeric forms interact with RNA. Interacts with protein M. Interacts with NSP3; this interaction serves to tether the genome to the newly translated replicase-transcriptase complex at a very early stage of infection. In terms of processing, ADP-ribosylated. The ADP-ribosylation is retained in the virion during infection. Phosphorylated on serine and threonine residues.

The protein localises to the virion. It localises to the host endoplasmic reticulum-Golgi intermediate compartment. Its subcellular location is the host Golgi apparatus. Its function is as follows. Packages the positive strand viral genome RNA into a helical ribonucleocapsid (RNP) and plays a fundamental role during virion assembly through its interactions with the viral genome and membrane protein M. Plays an important role in enhancing the efficiency of subgenomic viral RNA transcription as well as viral replication. The polypeptide is Nucleoprotein (Bovine coronavirus (strain LSU-94LSS-051) (BCoV-LSU)).